Consider the following 398-residue polypeptide: Lysophospholipid transporter LplT (398 aa).

11 helical membrane passes run 17-37 (AVLVSQFFSAFADNALLFAIL), 52-72 (ILQIVFVLAYILLAPFVGQIA), 90-110 (LGAFTICLGYDPFLGYALVGV), 137-157 (GLMEASTIIAILTGSVVGGFL), 163-183 (AIALLVCALMYGIAVVANFFI), 226-246 (LFWGAGITLRFLLVLWVPVVL), 256-276 (ILNVMVAVGIIIGAGAAARFI), 285-305 (MPAGVLIGVMVVIFAVQHSIW), 309-329 (VLLIILGIFGGLFIVPLNALL), 352-372 (IAMLLMLGLYSLVIKIGVPVV), and 373-393 (TTGIGFGTLLALTITSLWIWN).

Belongs to the major facilitator superfamily. LplT (TC 2.A.1.42) family.

The protein localises to the cell inner membrane. Its function is as follows. Catalyzes the facilitated diffusion of 2-acyl-glycero-3-phosphoethanolamine (2-acyl-GPE) into the cell. The sequence is that of Lysophospholipid transporter LplT from Photorhabdus laumondii subsp. laumondii (strain DSM 15139 / CIP 105565 / TT01) (Photorhabdus luminescens subsp. laumondii).